Reading from the N-terminus, the 427-residue chain is Transcobalamin-2 (427 aa).

The first 18 residues, 1-18 (MELLKALLLLSGVLGALA), serve as a signal peptide directing secretion. Cystine bridges form between C21–C268, C116–C310, and C165–C208. Cob(II)alamin-binding positions include 152-156 (TSYYQ), H193, 193-197 (HLSVD), N245, S248, Q292, and 395-397 (WQL).

This sequence belongs to the eukaryotic cobalamin transport proteins family. In terms of assembly, interacts with CD320 (via LDL-receptor class A domains).

The protein resides in the secreted. Functionally, primary vitamin B12-binding and transport protein. Delivers cobalamin to cells. The sequence is that of Transcobalamin-2 (Tcn2) from Rattus norvegicus (Rat).